The sequence spans 957 residues: Collagen alpha-1(XXI) chain (957 aa).

Residues 1-16 (MPGIIYILCSILLIES) form the signal peptide. The VWFA domain maps to 37-211 (DLVFILDGSW…RIREIMKQKL (175 aa)). The 183-residue stretch at 230–412 (GFDILLGLGI…LQKLRIYCDP (183 aa)) folds into the Laminin G-like domain. 2 disordered regions span residues 441 to 788 (PAPC…GKEQ) and 820 to 935 (CKTQ…DAGI). Collagen-like domains follow at residues 448–501 (PGEK…PRGF), 502–543 (AGLK…DKGD), 544–591 (IGID…EEGK), 592–642 (PGPP…ISGP), 643–684 (EGIS…IPGQ), 685–741 (QGYT…EIGE), 742–786 (HGHR…QQGK), and 825–882 (GSPG…GNKG). The segment covering 483–498 (TSGSPGIPGSPGVQGP) has biased composition (low complexity). Basic and acidic residues predominate over residues 535–556 (MGPKGDKGDIGIDGKKGTKGDK). 2 stretches are compositionally biased toward low complexity: residues 597 to 616 (MEGLRGLPGIPGIPGNDGAN) and 633 to 649 (PTGTPGISGPEGISGPQ). Positions 733-744 (KGEKGEIGEHGH) are enriched in basic and acidic residues. Positions 775-786 (QGLPGPKGQQGK) are enriched in low complexity.

Belongs to the fibril-associated collagens with interrupted helices (FACIT) family.

It localises to the secreted. Its subcellular location is the extracellular space. The protein localises to the extracellular matrix. It is found in the cytoplasm. The protein is Collagen alpha-1(XXI) chain (col21a1) of Xenopus laevis (African clawed frog).